Reading from the N-terminus, the 460-residue chain is Cysteine--tRNA ligase (460 aa).

A Zn(2+)-binding site is contributed by cysteine 27. The short motif at 29–39 (PTVYDLIHVGN) is the 'HIGH' region element. Residues cysteine 207, histidine 232, and glutamate 236 each coordinate Zn(2+). The short motif at 264–268 (KMSKS) is the 'KMSKS' region element. An ATP-binding site is contributed by lysine 267.

The protein belongs to the class-I aminoacyl-tRNA synthetase family. In terms of assembly, monomer. Zn(2+) serves as cofactor.

It is found in the cytoplasm. It catalyses the reaction tRNA(Cys) + L-cysteine + ATP = L-cysteinyl-tRNA(Cys) + AMP + diphosphate. In Thermotoga maritima (strain ATCC 43589 / DSM 3109 / JCM 10099 / NBRC 100826 / MSB8), this protein is Cysteine--tRNA ligase (cysS).